The primary structure comprises 770 residues: Arf-GAP with coiled-coil, ANK repeat and PH domain-containing protein 2 (770 aa).

The 221-residue stretch at 6–226 folds into the BAR domain; it reads DFEECLKDSP…MKDLGAQLDR (221 aa). Residues 266-361 enclose the PH domain; sequence GIVMEGYLFK…WIKAVQTSIA (96 aa). Residues 371-392 form a disordered region; that stretch reads SEKLDKKSSPSTGSLDSGSESK. The segment covering 379–388 has biased composition (low complexity); it reads SPSTGSLDSG. A phosphoserine mark is found at Ser384 and Ser387. An Arf-GAP domain is found at 399–520; it reads ESALQRVQCI…KFVDKYSTLL (122 aa). Residues 414 to 437 form a C4-type zinc finger; that stretch reads CCDCGLADPRWASINLGITLCIEC. A Phosphoserine modification is found at Ser521. Over residues 548-561 the composition is skewed to polar residues; sequence TPVKSNDSGIQQCS. Positions 548–571 are disordered; the sequence is TPVKSNDSGIQQCSDDGRESLPST. Phosphoserine is present on residues Ser573 and Ser576. ANK repeat units lie at residues 632-661, 665-694, and 698-727; these read NQATPLIQAVLGGSLVTCEFLLQNGANVNQ, QGRGPLHHATVLGHTGQVCLFLKRGANQHA, and EGKDPLSIAVEAANADIVTLLRLARMNEEM. Residue Tyr734 is modified to Phosphotyrosine. At Ser767 the chain carries Phosphoserine.

As to quaternary structure, interacts with RAB35 (GTP-bound form); the interaction is direct and probably recruits ACAP2 to membranes. Interacts with MICALL1; the interaction is indirect through RAB35.

It localises to the endosome membrane. Its subcellular location is the cell membrane. GAP activity stimulated by phosphatidylinositol 4,5-bisphosphate (PIP2) and phosphatidic acid. Its function is as follows. GTPase-activating protein (GAP) for ADP ribosylation factor 6 (ARF6). Doesn't show GAP activity for RAB35. This chain is Arf-GAP with coiled-coil, ANK repeat and PH domain-containing protein 2 (Acap2), found in Rattus norvegicus (Rat).